Reading from the N-terminus, the 119-residue chain is Large ribosomal subunit protein bL20 (119 aa).

This sequence belongs to the bacterial ribosomal protein bL20 family.

Its function is as follows. Binds directly to 23S ribosomal RNA and is necessary for the in vitro assembly process of the 50S ribosomal subunit. It is not involved in the protein synthesizing functions of that subunit. The polypeptide is Large ribosomal subunit protein bL20 (Streptococcus agalactiae serotype Ia (strain ATCC 27591 / A909 / CDC SS700)).